Reading from the N-terminus, the 219-residue chain is Octanoyltransferase (219 aa).

The BPL/LPL catalytic domain occupies 32–207; the sequence is ENSQDEIWIV…TLSQELGLDK (176 aa). Residues 71-78, 138-140, and 151-153 each bind substrate; these read RGGQVTYH, SLG, and GLA. Cys169 functions as the Acyl-thioester intermediate in the catalytic mechanism.

This sequence belongs to the LipB family.

The protein resides in the cytoplasm. It catalyses the reaction octanoyl-[ACP] + L-lysyl-[protein] = N(6)-octanoyl-L-lysyl-[protein] + holo-[ACP] + H(+). It participates in protein modification; protein lipoylation via endogenous pathway; protein N(6)-(lipoyl)lysine from octanoyl-[acyl-carrier-protein]: step 1/2. Functionally, catalyzes the transfer of endogenously produced octanoic acid from octanoyl-acyl-carrier-protein onto the lipoyl domains of lipoate-dependent enzymes. Lipoyl-ACP can also act as a substrate although octanoyl-ACP is likely to be the physiological substrate. This is Octanoyltransferase from Shewanella halifaxensis (strain HAW-EB4).